Here is a 279-residue protein sequence, read N- to C-terminus: NADPH-dependent 7-cyano-7-deazaguanine reductase (279 aa).

Position 86–88 (86–88 (IES)) interacts with substrate. 88 to 89 (SK) contacts NADPH. The active-site Thioimide intermediate is Cys-187. Catalysis depends on Asp-194, which acts as the Proton donor. Residue 226–227 (HE) participates in substrate binding. 255–256 (RG) contributes to the NADPH binding site.

It belongs to the GTP cyclohydrolase I family. QueF type 2 subfamily. In terms of assembly, homodimer.

The protein resides in the cytoplasm. The enzyme catalyses 7-aminomethyl-7-carbaguanine + 2 NADP(+) = 7-cyano-7-deazaguanine + 2 NADPH + 3 H(+). It participates in tRNA modification; tRNA-queuosine biosynthesis. Functionally, catalyzes the NADPH-dependent reduction of 7-cyano-7-deazaguanine (preQ0) to 7-aminomethyl-7-deazaguanine (preQ1). The chain is NADPH-dependent 7-cyano-7-deazaguanine reductase from Actinobacillus pleuropneumoniae serotype 3 (strain JL03).